The primary structure comprises 172 residues: Protein CapG (172 aa).

This sequence belongs to the transferase hexapeptide repeat family.

Its pathway is capsule biogenesis; capsule polysaccharide biosynthesis. Its function is as follows. Required for the biosynthesis of type 1 capsular polysaccharide. The sequence is that of Protein CapG (capG) from Staphylococcus aureus.